The chain runs to 196 residues: Imidazole glycerol phosphate synthase subunit HisH (196 aa).

The Glutamine amidotransferase type-1 domain occupies 2–196 (NVVILDTGCA…AQLLKNFLEM (195 aa)). C77 (nucleophile) is an active-site residue. Active-site residues include H178 and E180.

In terms of assembly, heterodimer of HisH and HisF.

It is found in the cytoplasm. The catalysed reaction is 5-[(5-phospho-1-deoxy-D-ribulos-1-ylimino)methylamino]-1-(5-phospho-beta-D-ribosyl)imidazole-4-carboxamide + L-glutamine = D-erythro-1-(imidazol-4-yl)glycerol 3-phosphate + 5-amino-1-(5-phospho-beta-D-ribosyl)imidazole-4-carboxamide + L-glutamate + H(+). It catalyses the reaction L-glutamine + H2O = L-glutamate + NH4(+). It participates in amino-acid biosynthesis; L-histidine biosynthesis; L-histidine from 5-phospho-alpha-D-ribose 1-diphosphate: step 5/9. Functionally, IGPS catalyzes the conversion of PRFAR and glutamine to IGP, AICAR and glutamate. The HisH subunit catalyzes the hydrolysis of glutamine to glutamate and ammonia as part of the synthesis of IGP and AICAR. The resulting ammonia molecule is channeled to the active site of HisF. The protein is Imidazole glycerol phosphate synthase subunit HisH of Salmonella choleraesuis (strain SC-B67).